The following is a 105-amino-acid chain: Endogenous retrovirus group K member 8 Rec protein (105 aa).

Positions 1–48 (MNPSEMQRKAPPRRRRHRNRAPLTHKMNKMVTSEEQMKLPSTKKAEPP) are disordered. Basic residues predominate over residues 10–20 (APPRRRRHRNR). Positions 13 to 20 (RRRRHRNR) match the Nuclear localization signal motif. Residues 50-59 (WAQLKKLTQL) carry the Nuclear export signal motif.

In terms of assembly, forms homodimers, homotrimers, and homotetramers via a C-terminal domain. Associates with XPO1 and with ZNF145.

It is found in the cytoplasm. The protein localises to the nucleus. Its subcellular location is the nucleolus. In terms of biological role, retroviral replication requires the nuclear export and translation of unspliced, singly-spliced and multiply-spliced derivatives of the initial genomic transcript. Rec interacts with a highly structured RNA element (RcRE) present in the viral 3'LTR and recruits the cellular nuclear export machinery. This permits export to the cytoplasm of unspliced genomic or incompletely spliced subgenomic viral transcripts. In Homo sapiens (Human), this protein is Endogenous retrovirus group K member 8 Rec protein (ERVK-8).